The primary structure comprises 698 residues: DNA ligase (698 aa).

Residues 40-44, 89-90, and glutamate 123 each bind NAD(+); these read DDVYD and SL. The N6-AMP-lysine intermediate role is filled by lysine 125. NAD(+) is bound by residues arginine 146, glutamate 184, lysine 300, and lysine 324. The Zn(2+) site is built by cysteine 417, cysteine 420, cysteine 435, and cysteine 441. A BRCT domain is found at 618 to 698; that stretch reads SSASPVAGKA…EWLALTGAAD (81 aa).

It belongs to the NAD-dependent DNA ligase family. LigA subfamily. The cofactor is Mg(2+). Mn(2+) is required as a cofactor.

It catalyses the reaction NAD(+) + (deoxyribonucleotide)n-3'-hydroxyl + 5'-phospho-(deoxyribonucleotide)m = (deoxyribonucleotide)n+m + AMP + beta-nicotinamide D-nucleotide.. In terms of biological role, DNA ligase that catalyzes the formation of phosphodiester linkages between 5'-phosphoryl and 3'-hydroxyl groups in double-stranded DNA using NAD as a coenzyme and as the energy source for the reaction. It is essential for DNA replication and repair of damaged DNA. The chain is DNA ligase from Paramagnetospirillum magneticum (strain ATCC 700264 / AMB-1) (Magnetospirillum magneticum).